Reading from the N-terminus, the 365-residue chain is MAGDMEFKSWGYTQINVQKFCYNWTISNFSFCMGAHQKSITSPVFSLEASKEVAWCLRLYPNGVDEESKDYLSVYLELLSALESPILAKFEFWIINSQGEKYQSRKISNVQCFLQYEHRGFKKFLLRGLLLSHMNWFLPEDQFTICCKVSIVGTVFDMPVQKRTPAIKDPRHMLTDDLGELWENSLFTDCCLLVAGHEFKAHKAILAARSPVFRAMFENEMKESLKNPIEIMDLDLDVFKEMMGFIYTGKAPHLHSHSMACDVLPAADKYGLVGLKVLCEDVLCRNLSVKTAAHTLILADLNSTEKLKSQALDFIAIHACEVSETSEWKSMWKSHPHLVAEAFHSLASAKCSFLEPNVVLESSQL.

Residues 19–149 (KFCYNWTISN…EDQFTICCKV (131 aa)) enclose the MATH domain. One can recognise a BTB domain in the interval 188–250 (TDCCLLVAGH…EMMGFIYTGK (63 aa)).

This sequence belongs to the Tdpoz family.

This is TD and POZ domain-containing protein 3 from Mus musculus (Mouse).